The following is a 711-amino-acid chain: Polyribonucleotide nucleotidyltransferase (711 aa).

2 residues coordinate Mg(2+): Asp-486 and Asp-492. The KH domain occupies 553-612; it reads PRIHTIKISTDKIKDVIGKGGSVIRALTEETGTTIEIEDDGTVKIAATDGEKAKYAIRRI. In terms of domain architecture, S1 motif spans 622–690; that stretch reads GRIYNGKVTR…RQGRVRLSIK (69 aa). A disordered region spans residues 690–711; sequence KEATEQSQPAAAPEAPASEQAE. Low complexity predominate over residues 694 to 711; sequence EQSQPAAAPEAPASEQAE.

The protein belongs to the polyribonucleotide nucleotidyltransferase family. As to quaternary structure, component of the RNA degradosome, which is a multiprotein complex involved in RNA processing and mRNA degradation. Mg(2+) is required as a cofactor.

It is found in the cytoplasm. It catalyses the reaction RNA(n+1) + phosphate = RNA(n) + a ribonucleoside 5'-diphosphate. In terms of biological role, involved in mRNA degradation. Catalyzes the phosphorolysis of single-stranded polyribonucleotides processively in the 3'- to 5'-direction. The chain is Polyribonucleotide nucleotidyltransferase from Salmonella choleraesuis (strain SC-B67).